The following is a 361-amino-acid chain: D-alanine--D-alanine ligase (361 aa).

Positions 139 to 336 (KLLLKEKEIS…FSQIIDNMIN (198 aa)) constitute an ATP-grasp domain. Position 167–222 (167–222 (EKNLGYPMIVKPARLGSSIGVSKVVDRKNFEEAVKNVLLFDNKVLVEKWINAREIN)) interacts with ATP. Residues Asp-296, Glu-307, and Asn-309 each coordinate Mg(2+).

Belongs to the D-alanine--D-alanine ligase family. The cofactor is Mg(2+). Mn(2+) serves as cofactor.

It is found in the cytoplasm. The catalysed reaction is 2 D-alanine + ATP = D-alanyl-D-alanine + ADP + phosphate + H(+). The protein operates within cell wall biogenesis; peptidoglycan biosynthesis. In terms of biological role, cell wall formation. The protein is D-alanine--D-alanine ligase of Thermosipho melanesiensis (strain DSM 12029 / CIP 104789 / BI429).